The sequence spans 382 residues: Glutamate 5-kinase (382 aa).

Lys-15 contributes to the ATP binding site. The substrate site is built by Ser-62, Asp-149, and Asn-161. 181-182 is an ATP binding site; it reads TD. One can recognise a PUA domain in the interval 288–366; the sequence is RGSVSVDAGA…VEIERLLGYS (79 aa).

This sequence belongs to the glutamate 5-kinase family.

The protein localises to the cytoplasm. It catalyses the reaction L-glutamate + ATP = L-glutamyl 5-phosphate + ADP. It functions in the pathway amino-acid biosynthesis; L-proline biosynthesis; L-glutamate 5-semialdehyde from L-glutamate: step 1/2. Its function is as follows. Catalyzes the transfer of a phosphate group to glutamate to form L-glutamate 5-phosphate. The protein is Glutamate 5-kinase of Delftia acidovorans (strain DSM 14801 / SPH-1).